Consider the following 108-residue polypeptide: uncharacterized protein (108 aa).

A compositionally biased stretch (polar residues) spans 1 to 14 (MSDSNSRLVYSTET). Residues 1 to 31 (MSDSNSRLVYSTETGRIDEPKAAPVRPKGDG) are disordered. Over residues 15-31 (GRIDEPKAAPVRPKGDG) the composition is skewed to basic and acidic residues.

Belongs to the SUI1 family.

This is an uncharacterized protein from Escherichia coli (strain K12).